A 284-amino-acid polypeptide reads, in one-letter code: ATP phosphoribosyltransferase (284 aa).

Belongs to the ATP phosphoribosyltransferase family. Long subfamily. Requires Mg(2+) as cofactor.

The protein resides in the cytoplasm. It carries out the reaction 1-(5-phospho-beta-D-ribosyl)-ATP + diphosphate = 5-phospho-alpha-D-ribose 1-diphosphate + ATP. Its pathway is amino-acid biosynthesis; L-histidine biosynthesis; L-histidine from 5-phospho-alpha-D-ribose 1-diphosphate: step 1/9. Its activity is regulated as follows. Feedback inhibited by histidine. Its function is as follows. Catalyzes the condensation of ATP and 5-phosphoribose 1-diphosphate to form N'-(5'-phosphoribosyl)-ATP (PR-ATP). Has a crucial role in the pathway because the rate of histidine biosynthesis seems to be controlled primarily by regulation of HisG enzymatic activity. The sequence is that of ATP phosphoribosyltransferase from Methanococcoides burtonii (strain DSM 6242 / NBRC 107633 / OCM 468 / ACE-M).